Consider the following 185-residue polypeptide: Elongation factor P (185 aa).

It belongs to the elongation factor P family.

Its subcellular location is the cytoplasm. The protein operates within protein biosynthesis; polypeptide chain elongation. Involved in peptide bond synthesis. Stimulates efficient translation and peptide-bond synthesis on native or reconstituted 70S ribosomes in vitro. Probably functions indirectly by altering the affinity of the ribosome for aminoacyl-tRNA, thus increasing their reactivity as acceptors for peptidyl transferase. This is Elongation factor P from Staphylococcus epidermidis (strain ATCC 35984 / DSM 28319 / BCRC 17069 / CCUG 31568 / BM 3577 / RP62A).